We begin with the raw amino-acid sequence, 90 residues long: U-scoloptoxin(15)-Sa3a (90 aa).

A signal peptide spans 1-18 (MKMVYLGLFLIITSCVIS).

The protein belongs to the scoloptoxin-15 family. In terms of processing, contains 3 disulfide bonds. As to expression, expressed by the venom gland.

It localises to the secreted. The protein is U-scoloptoxin(15)-Sa3a of Scolopendra alternans (Florida Keys giant centipede).